The primary structure comprises 79 residues: uncharacterized protein (79 aa).

The helical transmembrane segment at 53–73 threads the bilayer; sequence LFFAYMVAYIGFGILSIGMIV.

It localises to the membrane. This is an uncharacterized protein from Escherichia coli O157:H7.